We begin with the raw amino-acid sequence, 922 residues long: Chaperone protein ClpC, chloroplastic (922 aa).

Residues 1–72 (MARVLAQSLS…RPGLDFHSKV (72 aa)) constitute a chloroplast transit peptide. A Clp R domain is found at 92–234 (FERFTEKAIK…RTQVIRMVGE (143 aa)). 2 repeat regions span residues 95 to 160 (FTEK…IGRG) and 170 to 234 (FTPR…MVGE). Positions 255 to 502 (LEEYGTNLTK…RVRLQHAQLP (248 aa)) are i. Position 300 to 307 (300 to 307 (GEPGVGKT)) interacts with ATP. The UVR domain occupies 509–544 (DKEVRKIVKEKEEYVRNQDFEKAGELRDKEMDLKAQ). The segment at 569–760 (VTEVDIQHIV…LLIMTSNVGS (192 aa)) is II. Residue 643 to 650 (GPTGVGKS) participates in ATP binding.

Belongs to the ClpA/ClpB family. ClpC subfamily.

It localises to the plastid. It is found in the chloroplast. Functionally, molecular chaperone that may interact with a ClpP-like protease involved in degradation of denatured proteins in the chloroplast. The protein is Chaperone protein ClpC, chloroplastic of Pisum sativum (Garden pea).